The following is a 537-amino-acid chain: Chaperonin GroEL (537 aa).

ATP contacts are provided by residues 29 to 32 (TLGP), 86 to 90 (DGTTT), G413, 477 to 479 (NAA), and D493.

Belongs to the chaperonin (HSP60) family. As to quaternary structure, forms a cylinder of 14 subunits composed of two heptameric rings stacked back-to-back. Interacts with the co-chaperonin GroES.

Its subcellular location is the cytoplasm. The enzyme catalyses ATP + H2O + a folded polypeptide = ADP + phosphate + an unfolded polypeptide.. Together with its co-chaperonin GroES, plays an essential role in assisting protein folding. The GroEL-GroES system forms a nano-cage that allows encapsulation of the non-native substrate proteins and provides a physical environment optimized to promote and accelerate protein folding. The chain is Chaperonin GroEL from Bifidobacterium animalis subsp. lactis (strain AD011).